A 714-amino-acid chain; its full sequence is Fatty acid oxidation complex subunit alpha (714 aa).

The tract at residues 1 to 190 is enoyl-CoA hydratase; it reads MEMTSAFTLN…KLGLVDDVVP (190 aa). Residues 306–714 form a 3-hydroxyacyl-CoA dehydrogenase region; it reads APLNSVGILG…FWKTTATDLQ (409 aa).

The protein in the N-terminal section; belongs to the enoyl-CoA hydratase/isomerase family. It in the central section; belongs to the 3-hydroxyacyl-CoA dehydrogenase family. In terms of assembly, heterotetramer of two alpha chains (FadJ) and two beta chains (FadI).

It is found in the cytoplasm. It carries out the reaction a (3S)-3-hydroxyacyl-CoA = a (2E)-enoyl-CoA + H2O. The enzyme catalyses a 4-saturated-(3S)-3-hydroxyacyl-CoA = a (3E)-enoyl-CoA + H2O. The catalysed reaction is a (3S)-3-hydroxyacyl-CoA + NAD(+) = a 3-oxoacyl-CoA + NADH + H(+). It catalyses the reaction (3S)-3-hydroxybutanoyl-CoA = (3R)-3-hydroxybutanoyl-CoA. The protein operates within lipid metabolism; fatty acid beta-oxidation. Functionally, catalyzes the formation of a hydroxyacyl-CoA by addition of water on enoyl-CoA. Also exhibits 3-hydroxyacyl-CoA epimerase and 3-hydroxyacyl-CoA dehydrogenase activities. This Escherichia coli O8 (strain IAI1) protein is Fatty acid oxidation complex subunit alpha.